A 354-amino-acid chain; its full sequence is NADH-quinone oxidoreductase subunit H (354 aa).

8 helical membrane passes run 23-43 (LVRA…LILW), 91-111 (YIIA…VVPF), 124-144 (LLYV…AGWA), 162-182 (ISYE…TGSL), 203-223 (ILSW…ISGV), 250-270 (GMAF…ISAM), 291-311 (IPGF…FIWL), and 330-350 (IFIP…VSPW).

Belongs to the complex I subunit 1 family. As to quaternary structure, NDH-1 is composed of 14 different subunits. Subunits NuoA, H, J, K, L, M, N constitute the membrane sector of the complex.

Its subcellular location is the cell inner membrane. It catalyses the reaction a quinone + NADH + 5 H(+)(in) = a quinol + NAD(+) + 4 H(+)(out). Functionally, NDH-1 shuttles electrons from NADH, via FMN and iron-sulfur (Fe-S) centers, to quinones in the respiratory chain. The immediate electron acceptor for the enzyme in this species is believed to be ubiquinone. Couples the redox reaction to proton translocation (for every two electrons transferred, four hydrogen ions are translocated across the cytoplasmic membrane), and thus conserves the redox energy in a proton gradient. This subunit may bind ubiquinone. The protein is NADH-quinone oxidoreductase subunit H of Ralstonia nicotianae (strain ATCC BAA-1114 / GMI1000) (Ralstonia solanacearum).